An 81-amino-acid polypeptide reads, in one-letter code: Insect-toxin Cn10 (81 aa).

The signal sequence occupies residues 1 to 13 (ITACLVLIGTVCA). One can recognise an LCN-type CS-alpha/beta domain in the interval 14–79 (KEGYLVNKST…TYPIPGKTCR (66 aa)). Intrachain disulfides connect Cys25-Cys78, Cys29-Cys54, Cys38-Cys59, and Cys42-Cys61. Lys81 is a propeptide (removed by a carboxypeptidase).

This sequence belongs to the long (4 C-C) scorpion toxin superfamily. Sodium channel inhibitor family. Beta subfamily. In terms of tissue distribution, expressed by the venom gland.

The protein resides in the secreted. Beta toxins bind voltage-independently at site-4 of sodium channels (Nav) and shift the voltage of activation toward more negative potentials thereby affecting sodium channel activation and promoting spontaneous and repetitive firing. Is toxic on insects and crustaceans, but not on mammals. The protein is Insect-toxin Cn10 of Centruroides noxius (Mexican scorpion).